We begin with the raw amino-acid sequence, 394 residues long: Nicotinate phosphoribosyltransferase (394 aa).

H218 is modified (phosphohistidine; by autocatalysis).

It belongs to the NAPRTase family. In terms of processing, transiently phosphorylated on a His residue during the reaction cycle. Phosphorylation strongly increases the affinity for substrates and increases the rate of nicotinate D-ribonucleotide production. Dephosphorylation regenerates the low-affinity form of the enzyme, leading to product release.

The enzyme catalyses nicotinate + 5-phospho-alpha-D-ribose 1-diphosphate + ATP + H2O = nicotinate beta-D-ribonucleotide + ADP + phosphate + diphosphate. It participates in cofactor biosynthesis; NAD(+) biosynthesis; nicotinate D-ribonucleotide from nicotinate: step 1/1. Catalyzes the synthesis of beta-nicotinate D-ribonucleotide from nicotinate and 5-phospho-D-ribose 1-phosphate at the expense of ATP. The protein is Nicotinate phosphoribosyltransferase of Xylella fastidiosa (strain Temecula1 / ATCC 700964).